We begin with the raw amino-acid sequence, 347 residues long: Dihydroorotase (347 aa).

Residues H14 and H16 each contribute to the Zn(2+) site. Substrate-binding positions include 16-18 (HLR) and N42. The Zn(2+) site is built by K100, H137, and H175. K100 bears the N6-carboxylysine mark. Position 137 (H137) interacts with substrate. L220 contributes to the substrate binding site. Residue D248 coordinates Zn(2+). The active site involves D248. Residues H252 and A264 each contribute to the substrate site.

It belongs to the metallo-dependent hydrolases superfamily. DHOase family. Class II DHOase subfamily. Homodimer. The cofactor is Zn(2+).

It catalyses the reaction (S)-dihydroorotate + H2O = N-carbamoyl-L-aspartate + H(+). Its pathway is pyrimidine metabolism; UMP biosynthesis via de novo pathway; (S)-dihydroorotate from bicarbonate: step 3/3. Functionally, catalyzes the reversible cyclization of carbamoyl aspartate to dihydroorotate. The protein is Dihydroorotase of Stutzerimonas stutzeri (strain A1501) (Pseudomonas stutzeri).